The sequence spans 216 residues: MNENTFEKTKIKICGIRDLEIAKICREEGADYIGLNFVPSSPRKISLKDAQKIVEFYRDTKNSPEIVLLFYQNSPEEIRTVTSSLYHDLIQWVWDDPKLTFVDRKNFLGKRQICSYRVNSPIYNEDLKNIPSELLILDSYSKDAGGGTGETFNWNFISRIERKFLLAGGLNSSNVSNAIRTVKPYGVDVASGVESSPGIKDSQKVIQFIRNVRLGL.

The protein belongs to the TrpF family.

The enzyme catalyses N-(5-phospho-beta-D-ribosyl)anthranilate = 1-(2-carboxyphenylamino)-1-deoxy-D-ribulose 5-phosphate. The protein operates within amino-acid biosynthesis; L-tryptophan biosynthesis; L-tryptophan from chorismate: step 3/5. The polypeptide is N-(5'-phosphoribosyl)anthranilate isomerase (Leptospira borgpetersenii serovar Hardjo-bovis (strain JB197)).